A 260-amino-acid chain; its full sequence is Uridylate kinase (260 aa).

ATP is bound at residue 29–32 (KLSG). The interval 37–42 (GDLGYG) is involved in allosteric activation by GTP. A UMP-binding site is contributed by glycine 71. Glycine 72 and arginine 76 together coordinate ATP. Residues aspartate 91 and 152–159 (SGNPFFTT) each bind UMP. Threonine 179, tyrosine 185, and aspartate 188 together coordinate ATP.

Belongs to the UMP kinase family. In terms of assembly, homohexamer.

The protein localises to the cytoplasm. It catalyses the reaction UMP + ATP = UDP + ADP. It functions in the pathway pyrimidine metabolism; CTP biosynthesis via de novo pathway; UDP from UMP (UMPK route): step 1/1. Allosterically activated by GTP. Inhibited by UTP. Functionally, catalyzes the reversible phosphorylation of UMP to UDP. The chain is Uridylate kinase from Synechocystis sp. (strain ATCC 27184 / PCC 6803 / Kazusa).